Consider the following 731-residue polypeptide: 1,4-alpha-glucan branching enzyme GlgB (731 aa).

Aspartate 408 functions as the Nucleophile in the catalytic mechanism. Catalysis depends on glutamate 461, which acts as the Proton donor.

The protein belongs to the glycosyl hydrolase 13 family. GlgB subfamily. In terms of assembly, monomer.

The enzyme catalyses Transfers a segment of a (1-&gt;4)-alpha-D-glucan chain to a primary hydroxy group in a similar glucan chain.. It participates in glycan biosynthesis; glycogen biosynthesis. Functionally, catalyzes the formation of the alpha-1,6-glucosidic linkages in glycogen by scission of a 1,4-alpha-linked oligosaccharide from growing alpha-1,4-glucan chains and the subsequent attachment of the oligosaccharide to the alpha-1,6 position. The polypeptide is 1,4-alpha-glucan branching enzyme GlgB (Corynebacterium efficiens (strain DSM 44549 / YS-314 / AJ 12310 / JCM 11189 / NBRC 100395)).